The primary structure comprises 205 residues: FMN-dependent NADH:quinone oxidoreductase (205 aa).

FMN contacts are provided by residues serine 10 and 16 to 18 (SVS).

This sequence belongs to the azoreductase type 1 family. In terms of assembly, homodimer. Requires FMN as cofactor.

It catalyses the reaction 2 a quinone + NADH + H(+) = 2 a 1,4-benzosemiquinone + NAD(+). The enzyme catalyses N,N-dimethyl-1,4-phenylenediamine + anthranilate + 2 NAD(+) = 2-(4-dimethylaminophenyl)diazenylbenzoate + 2 NADH + 2 H(+). In terms of biological role, quinone reductase that provides resistance to thiol-specific stress caused by electrophilic quinones. Its function is as follows. Also exhibits azoreductase activity. Catalyzes the reductive cleavage of the azo bond in aromatic azo compounds to the corresponding amines. The chain is FMN-dependent NADH:quinone oxidoreductase from Agrobacterium fabrum (strain C58 / ATCC 33970) (Agrobacterium tumefaciens (strain C58)).